We begin with the raw amino-acid sequence, 206 residues long: Glycerol-3-phosphate acyltransferase (206 aa).

The next 5 helical transmembrane spans lie at 3–23, 51–71, 83–103, 113–133, and 162–182; these read LGWL…SYII, VGPA…AVVV, FAAA…YYGF, IGVL…IAIG, and WFGY…LSMW.

This sequence belongs to the PlsY family. Probably interacts with PlsX.

It is found in the cell membrane. The enzyme catalyses an acyl phosphate + sn-glycerol 3-phosphate = a 1-acyl-sn-glycero-3-phosphate + phosphate. It functions in the pathway lipid metabolism; phospholipid metabolism. Its function is as follows. Catalyzes the transfer of an acyl group from acyl-phosphate (acyl-PO(4)) to glycerol-3-phosphate (G3P) to form lysophosphatidic acid (LPA). This enzyme utilizes acyl-phosphate as fatty acyl donor, but not acyl-CoA or acyl-ACP. This Halalkalibacterium halodurans (strain ATCC BAA-125 / DSM 18197 / FERM 7344 / JCM 9153 / C-125) (Bacillus halodurans) protein is Glycerol-3-phosphate acyltransferase.